A 275-amino-acid polypeptide reads, in one-letter code: Formamidopyrimidine-DNA glycosylase (275 aa).

The active-site Schiff-base intermediate with DNA is P2. The active-site Proton donor is E3. The Proton donor; for beta-elimination activity role is filled by K58. The DNA site is built by H91, R109, and R154. The segment at 240–274 (AVYERAGLPCRVCGAPIRRLVQGQRATYFCPSCQK) adopts an FPG-type zinc-finger fold. The active-site Proton donor; for delta-elimination activity is the R264.

It belongs to the FPG family. In terms of assembly, monomer. Requires Zn(2+) as cofactor.

The enzyme catalyses Hydrolysis of DNA containing ring-opened 7-methylguanine residues, releasing 2,6-diamino-4-hydroxy-5-(N-methyl)formamidopyrimidine.. It carries out the reaction 2'-deoxyribonucleotide-(2'-deoxyribose 5'-phosphate)-2'-deoxyribonucleotide-DNA = a 3'-end 2'-deoxyribonucleotide-(2,3-dehydro-2,3-deoxyribose 5'-phosphate)-DNA + a 5'-end 5'-phospho-2'-deoxyribonucleoside-DNA + H(+). In terms of biological role, involved in base excision repair of DNA damaged by oxidation or by mutagenic agents. Acts as a DNA glycosylase that recognizes and removes damaged bases. Has a preference for oxidized purines, such as 7,8-dihydro-8-oxoguanine (8-oxoG). Has AP (apurinic/apyrimidinic) lyase activity and introduces nicks in the DNA strand. Cleaves the DNA backbone by beta-delta elimination to generate a single-strand break at the site of the removed base with both 3'- and 5'-phosphates. This is Formamidopyrimidine-DNA glycosylase from Bordetella parapertussis (strain 12822 / ATCC BAA-587 / NCTC 13253).